Reading from the N-terminus, the 328-residue chain is Phosphate acetyltransferase (328 aa).

Belongs to the phosphate acetyltransferase and butyryltransferase family.

The protein localises to the cytoplasm. The enzyme catalyses acetyl-CoA + phosphate = acetyl phosphate + CoA. The protein operates within metabolic intermediate biosynthesis; acetyl-CoA biosynthesis; acetyl-CoA from acetate: step 2/2. This is Phosphate acetyltransferase (pta) from Thermoanaerobacterium thermosaccharolyticum (strain ATCC 7956 / DSM 571 / NCIMB 9385 / NCA 3814 / NCTC 13789 / WDCM 00135 / 2032) (Clostridium thermosaccharolyticum).